Consider the following 535-residue polypeptide: Methylmalonate-semialdehyde/malonate-semialdehyde dehydrogenase [acylating], mitochondrial (535 aa).

Residues 1–32 (MAAAVAAAAAVRSRILQVSSKVNSTWYPASSF) constitute a mitochondrion transit peptide. An N6-acetyllysine; alternate mark is found at K47, K52, K55, and K76. 4 positions are modified to N6-succinyllysine; alternate: K47, K52, K55, and K76. Residue K87 is modified to N6-acetyllysine. An N6-acetyllysine; alternate mark is found at K117 and K129. N6-succinyllysine; alternate occurs at positions 117 and 129. NAD(+) contacts are provided by A183, F185, K209, E212, R213, and S262. Phosphoserine is present on S262. Residue K298 is modified to N6-acetyllysine. Catalysis depends on C317, which acts as the Nucleophile. 2 positions are modified to N6-acetyllysine: K330 and K331. K364 and K376 each carry N6-acetyllysine; alternate. An N6-succinyllysine; alternate mark is found at K364 and K376. S380 carries the phosphoserine modification. Position 391 is an N6-succinyllysine (K391). E417 is a binding site for NAD(+). At K500 the chain carries N6-acetyllysine. N6-succinyllysine is present on K517.

Belongs to the aldehyde dehydrogenase family. As to quaternary structure, homotetramer. In terms of tissue distribution, expressed in the head and flagellum of epididymal sperm but not in testicular sperm (at protein level). Kidney &gt; liver &gt; heart &gt; muscle &gt; brain.

Its subcellular location is the mitochondrion. The enzyme catalyses 3-oxopropanoate + NAD(+) + CoA + H2O = hydrogencarbonate + acetyl-CoA + NADH + H(+). It carries out the reaction 2-methyl-3-oxopropanoate + NAD(+) + CoA + H2O = propanoyl-CoA + hydrogencarbonate + NADH + H(+). It catalyses the reaction (R)-2-methyl-3-oxopropanoate + NAD(+) + CoA + H2O = propanoyl-CoA + hydrogencarbonate + NADH + H(+). The catalysed reaction is (S)-2-methyl-3-oxopropanoate + NAD(+) + CoA + H2O = propanoyl-CoA + hydrogencarbonate + NADH + H(+). Its function is as follows. Malonate and methylmalonate semialdehyde dehydrogenase involved in the catabolism of valine, thymine, and compounds catabolized by way of beta-alanine, including uracil and cytidine. The sequence is that of Methylmalonate-semialdehyde/malonate-semialdehyde dehydrogenase [acylating], mitochondrial from Rattus norvegicus (Rat).